The primary structure comprises 215 residues: Intraflagellar transport protein 43 homolog B (215 aa).

A disordered region spans residues 1 to 107 (MDDHLKLGDS…SDGEGDIPVI (107 aa)).

It belongs to the IFT43 family. Component of IFT complex A.

Component of IFT complex A (IFT-A) involved in retrograde ciliary transport along microtubules from the ciliary tip to the base. The sequence is that of Intraflagellar transport protein 43 homolog B (ift43b) from Salmo salar (Atlantic salmon).